A 466-amino-acid chain; its full sequence is Ribulose bisphosphate carboxylase large chain (466 aa).

At Lys-5 the chain carries N6,N6,N6-trimethyllysine. Positions 114 and 164 each coordinate substrate. Lys-166 serves as the catalytic Proton acceptor. Lys-168 is a binding site for substrate. Mg(2+)-binding residues include Lys-192, Asp-194, and Glu-195. Lys-192 is modified (N6-carboxylysine). His-285 acts as the Proton acceptor in catalysis. Residues Arg-286, His-318, and Ser-370 each contribute to the substrate site.

It belongs to the RuBisCO large chain family. Type I subfamily. Heterohexadecamer of 8 large chains and 8 small chains; disulfide-linked. The disulfide link is formed within the large subunit homodimers. It depends on Mg(2+) as a cofactor. Post-translationally, the disulfide bond which can form in the large chain dimeric partners within the hexadecamer appears to be associated with oxidative stress and protein turnover.

Its subcellular location is the plastid. The protein localises to the chloroplast. It catalyses the reaction 2 (2R)-3-phosphoglycerate + 2 H(+) = D-ribulose 1,5-bisphosphate + CO2 + H2O. The enzyme catalyses D-ribulose 1,5-bisphosphate + O2 = 2-phosphoglycolate + (2R)-3-phosphoglycerate + 2 H(+). Its function is as follows. RuBisCO catalyzes two reactions: the carboxylation of D-ribulose 1,5-bisphosphate, the primary event in carbon dioxide fixation, as well as the oxidative fragmentation of the pentose substrate in the photorespiration process. Both reactions occur simultaneously and in competition at the same active site. The chain is Ribulose bisphosphate carboxylase large chain from Silene gallica (Common catchfly).